The primary structure comprises 701 residues: Meprin A subunit beta (701 aa).

The first 22 residues, 1 to 22 (MDLWNLSWFLFLDALLVISGLA), serve as a signal peptide directing secretion. A propeptide spanning residues 23–61 (TPENFDVDGGMDQDIFDINEGLGLDLFEGDIRLDRAQIR) is cleaved from the precursor. The Extracellular segment spans residues 23–652 (TPENFDVDGG…CEKRGSTRDT (630 aa)). Residues 62–256 (NSIIGEKYRW…LKLNQLYNCS (195 aa)) form the Peptidase M12A domain. 3 cysteine pairs are disulfide-bonded: Cys-103-Cys-255, Cys-124-Cys-144, and Cys-265-Cys-427. A Zn(2+)-binding site is contributed by His-152. The active site involves Glu-153. Residues His-156 and His-162 each contribute to the Zn(2+) site. N-linked (GlcNAc...) asparagine glycans are attached at residues Asn-218, Asn-254, Asn-370, Asn-421, Asn-436, Asn-445, Asn-547, and Asn-592. The MAM domain occupies 260 to 429 (SFMDSCSFEL…INLSETRCPH (170 aa)). An MATH domain is found at 430–585 (HIWHIRNFTQ…GDDVYILLTV (156 aa)). O-linked (GalNAc...) serine glycosylation occurs at Ser-593. Residues Thr-594 and Thr-599 are each glycosylated (O-linked (GalNAc...) threonine). The segment at 595 to 607 (QIQLTPAPSVQDL) is required for proteolytic processing. Ser-603 carries O-linked (GalNAc...) serine glycosylation. The EGF-like domain maps to 604–644 (VQDLCSKTTCKNDGVCTVRDGKAECRCQSGEDWWYMGERCE). 3 disulfide bridges follow: Cys-608–Cys-619, Cys-613–Cys-628, and Cys-630–Cys-643. A helical transmembrane segment spans residues 653-673 (IVIAVSSTVAVFALMLIITLV). Topologically, residues 674-701 (SVYCTRKKYRERMSSNRPNLTPQNQHAF) are cytoplasmic. Thr-694 bears the Phosphothreonine mark.

In terms of assembly, homotetramer consisting of disulfide-linked beta subunits, or heterotetramer of two alpha and two beta subunits formed by non-covalent association of two disulfide-linked heterodimers. Interacts with MBL2 through its carbohydrate moiety. This interaction may inhibit its catalytic activity. Interacts with TSPAN8. The cofactor is Zn(2+). Phosphorylated by PKC at multiple sites of its cytoplasmic part. Phosphorylation dcreases activity at the cell surface, leading to diminished substrate cleavage. In terms of processing, N-glycosylated; contains high mannose and/or complex biantennary structures. Post-translationally, O-glycosylation protect the C-terminal region from proteolytic cleavage and diminish secretion, this seems to be specific to human. Proteolytically activated by trypsin in the intestinal lumen and kallikrein-related peptidases in other tissues. The major site of expression is the brush border membrane of small intestinal and kidney epithelial cells.

The protein resides in the cell membrane. The protein localises to the secreted. The enzyme catalyses Hydrolysis of proteins, including azocasein, and peptides. Hydrolysis of 5-His-|-Leu-6, 6-Leu-|-Cys-7, 14-Ala-|-Leu-15 and 19-Cys-|-Gly-20 bonds in insulin B chain.. Strongly inhibited by fetuin-A/AHSG. Its function is as follows. Membrane metallopeptidase that sheds many membrane-bound proteins. Exhibits a strong preference for acidic amino acids at the P1' position. Known substrates include: FGF19, VGFA, IL1B, IL18, procollagen I and III, E-cadherin, KLK7, gastrin, ADAM10, tenascin-C. The presence of several pro-inflammatory cytokine among substrates implicate MEP1B in inflammation. It is also involved in tissue remodeling due to its capability to degrade extracellular matrix components. Also cleaves the amyloid precursor protein/APP, thereby releasing neurotoxic amyloid beta peptides. The polypeptide is Meprin A subunit beta (MEP1B) (Homo sapiens (Human)).